The following is a 147-amino-acid chain: S-protein homolog 10 (147 aa).

The N-terminal stretch at 1–20 (MNCFSYFFLVIILCAGLNNA) is a signal peptide.

The protein belongs to the plant self-incompatibility (S1) protein family.

The protein resides in the secreted. This Arabidopsis thaliana (Mouse-ear cress) protein is S-protein homolog 10.